Consider the following 160-residue polypeptide: Cyclic pyranopterin monophosphate synthase (160 aa).

Substrate-binding positions include 76 to 78 and 114 to 115; these read LCH and ME. Asp-129 is an active-site residue.

The protein belongs to the MoaC family. Homohexamer; trimer of dimers.

It catalyses the reaction (8S)-3',8-cyclo-7,8-dihydroguanosine 5'-triphosphate = cyclic pyranopterin phosphate + diphosphate. It participates in cofactor biosynthesis; molybdopterin biosynthesis. Catalyzes the conversion of (8S)-3',8-cyclo-7,8-dihydroguanosine 5'-triphosphate to cyclic pyranopterin monophosphate (cPMP). This chain is Cyclic pyranopterin monophosphate synthase, found in Mesorhizobium japonicum (strain LMG 29417 / CECT 9101 / MAFF 303099) (Mesorhizobium loti (strain MAFF 303099)).